A 438-amino-acid chain; its full sequence is Putative F-box/FBD/LRR-repeat protein At5g44950 (438 aa).

The F-box domain maps to 3–49; the sequence is RDRISELPDGLLNHILMYLHIEESIRTSVLSSRWRKLWLKVPGLDVN. LRR repeat units lie at residues 246–275 and 286–310; these read LSSL…DLTK and ISSV…KIGQ. In terms of domain architecture, FBD spans 355 to 407; the sequence is PEQIDFTNLPRCLISTLEYVEIKQLTMREESGIKLVKYFLENSAVLKKLTLSF.

In Arabidopsis thaliana (Mouse-ear cress), this protein is Putative F-box/FBD/LRR-repeat protein At5g44950.